Reading from the N-terminus, the 36-residue chain is Glycine-rich protein GWK (36 aa).

The interval 1–36 (YKRGGGGWGGGGGWKGGGGGGGGWKGGGGGGKGGGG) is disordered.

Possesses antifungal activity against a number of phytopathogenic fungi, including H.sativum and F.culmorum. The chain is Glycine-rich protein GWK from Cucumis melo (Muskmelon).